The sequence spans 119 residues: NLIHFSSMIKCTIPGSKPVPDYSDYGCYCGKGGSGTPVDALDRCCQVHDKCYGDAESIYGCTPFLTYYSYECSERQDLCRGNGTKCKAFVCNCDRLAALCFAKAPYNKKNYNINLNRCK.

7 disulfides stabilise this stretch: C11/C72, C27/C118, C29/C45, C44/C100, C51/C93, C61/C86, and C79/C91. Residues Y28, G30, and G32 each coordinate Ca(2+). H48 is an active-site residue. Position 49 (D49) interacts with Ca(2+). A glycan (N-linked (GlcNAc...) asparagine) is linked at N82. D94 is a catalytic residue.

Belongs to the phospholipase A2 family. Group I subfamily. D49 sub-subfamily. Ca(2+) is required as a cofactor. As to expression, expressed by the venom gland.

It localises to the secreted. The enzyme catalyses a 1,2-diacyl-sn-glycero-3-phosphocholine + H2O = a 1-acyl-sn-glycero-3-phosphocholine + a fatty acid + H(+). Snake venom phospholipase A2 (PLA2) that shows weak myotoxicity and induces edema in mice. Shows no cytotoxicity in vitro. Has an anticoagulant effect in vitro. PLA2 catalyzes the calcium-dependent hydrolysis of the 2-acyl groups in 3-sn-phosphoglycerides. The protein is Basic phospholipase A2 of Micrurus mipartitus (Red-tailed coral snake).